The primary structure comprises 396 residues: Cyclic GMP-AMP synthase-like receptor (396 aa).

ATP is bound by residues Ser-63 and 75-77 (EFD). Mg(2+) contacts are provided by Glu-75, Asp-77, and Asp-194. Position 194 (Asp-194) interacts with GTP. ATP is bound by residues 241-244 (QEQE), Lys-262, and 275-279 (SYYLK). Mn(2+) contacts are provided by Val-286, Glu-287, and Asp-292. Residues 376–396 (IMNGGNPQQSANAENGSCLSM) are disordered. Polar residues predominate over residues 380–396 (GNPQQSANAENGSCLSM).

The protein belongs to the mab-21 family. It depends on Mg(2+) as a cofactor. Mn(2+) is required as a cofactor.

It carries out the reaction GTP + ATP = 2',3'-cGAMP + 2 diphosphate. The catalysed reaction is GTP + ATP = pppGp(2'-5')A + diphosphate. It catalyses the reaction pppGp(2'-5')A = 2',3'-cGAMP + diphosphate. Its function is as follows. Nucleotidyltransferase that catalyzes the formation of cyclic GMP-AMP (2',3'-cGAMP) from ATP and GTP and plays a key role in innate immunity. Acts as a key sensor of double-stranded RNA (dsRNA), the presence of dsRNA in the cytoplasm being a danger signal that triggers the immune responses. Directly binds dsRNA, activating the nucleotidyltransferase activity, leading to synthesis of 2',3'-cGAMP, a second messenger that binds to and activates Sting, thereby triggering the immune response via activation of the NF-kappa-B transcription factor. The polypeptide is Cyclic GMP-AMP synthase-like receptor (Aethina tumida (Small hive beetle)).